The chain runs to 355 residues: Phosphatidylinositol:ceramide inositolphosphotransferase (355 aa).

The Cytoplasmic portion of the chain corresponds to 1-44; that stretch reads MISYPFFSLSPPGLVPPPMAVPPVEMYSGSFWNRMRKPLPLRTQ. A helical transmembrane segment spans residues 45–65; that stretch reads VIRFTVVFVIVSFILAVALQI. Topologically, residues 66–89 are extracellular; sequence THERMPDPKVTKPLPDLGFELLTK. A helical membrane pass occupies residues 90–110; the sequence is ISFLSVVTDVLIAFLSSLSFF. Residues 111–165 are Cytoplasmic-facing; sequence TLWKLYLLHRHCVGSGEPELPCNIPGVSRFFLSVWLCKENCRIELRNVHTIAWIR. The chain crosses the membrane as a helical span at residues 166–186; that stretch reads FITSYALLLLFRSLVIVMTSM. The Extracellular portion of the chain corresponds to 187–205; it reads PTPVDKCQNPPKIENPVKN. The chain crosses the membrane as a helical span at residues 206–226; it reads VILTVLTAGGGSIHCGDLMYS. Residues 227-251 lie on the Cytoplasmic side of the membrane; that stretch reads GHTVILTLHLMFHWIYGAMVHWSFR. Active-site residues include His-228, His-271, and Asp-275. The chain crosses the membrane as a helical span at residues 252–272; sequence PVVTVVAIFGYYCIVASRSHY. Residues 273-275 lie on the Extracellular side of the membrane; sequence TDD. A helical membrane pass occupies residues 276–296; sequence VLVAIYLTIATFIAVGHNADG. Residues 297-355 lie on the Cytoplasmic side of the membrane; it reads APWQLQLFIRWLPCCGANSREVTEDSQPVMVAFKSEAVDELRERDDSAGLSCEVSTNEV.

It belongs to the sphingomyelin synthase family.

The protein localises to the membrane. In terms of biological role, bidirectional lipid inositolphosphotransferase capable of converting phosphatidylinositol (PI) and ceramide to inositol-phosphorylceramide (IPC) and diacylglycerol (DAG) and vice versa. Direction is dependent on the relative concentrations of DAG and ceramide as phosphoinositol acceptors. Does not function strictly as a SM synthase. Essential for viability of the pathogenic bloodstream stage of this human protozoan parasite and, consequently, can be considered as potential drug target. This is Phosphatidylinositol:ceramide inositolphosphotransferase from Trypanosoma brucei brucei (strain 927/4 GUTat10.1).